Consider the following 818-residue polypeptide: Sorting nexin-29 (818 aa).

The RUN domain maps to S36–K180. A disordered region spans residues V267–S299. 7 positions are modified to phosphoserine: S268, S291, S292, S330, S344, S447, and S452. 2 disordered regions span residues K343–T375 and R441–S462. Residues A445–S462 show a composition bias toward low complexity. The stretch at M467–V547 forms a coiled coil. S642 is subject to Phosphoserine. A Phosphothreonine modification is found at T644. Phosphoserine occurs at positions 645 and 649. The PX domain maps to A659 to G782. The tract at residues P781 to L818 is disordered.

It belongs to the sorting nexin family.

The chain is Sorting nexin-29 (Snx29) from Mus musculus (Mouse).